We begin with the raw amino-acid sequence, 747 residues long: Mediator of RNA polymerase II transcription subunit 25 (747 aa).

The interval M1–L226 is interaction with the Mediator complex. Disordered regions lie at residues G233–V274 and L299–G390. 2 stretches are compositionally biased toward pro residues: residues Q263–Y272 and P326–S342. The segment at L389–N543 is interaction with VP16. The interval V395–K545 is interaction with CREBBP. A disordered region spans residues Q548–I747. Interaction with RARA regions lie at residues A564–P653 and P640–Q707. Residues A598–A611 are compositionally biased toward low complexity. Positions Q612–I634 are enriched in pro residues. The short motif at L646–L650 is the LXXLL motif element. 3 stretches are compositionally biased toward pro residues: residues N652–Q664, P673–H683, and L691–P713. R725 carries the post-translational modification Asymmetric dimethylarginine. The segment covering M738–I747 has biased composition (acidic residues).

The protein belongs to the Mediator complex subunit 25 family. In terms of assembly, component of the Mediator complex, which is composed of MED1, MED4, MED6, MED7, MED8, MED9, MED10, MED11, MED12, MED13, MED13L, MED14, MED15, MED16, MED17, MED18, MED19, MED20, MED21, MED22, MED23, MED24, MED25, MED26, MED27, MED29, MED30, MED31, CCNC, CDK8 and CDC2L6/CDK11. The MED12, MED13, CCNC and CDK8 subunits form a distinct module termed the CDK8 module. Mediator containing the CDK8 module is less active than Mediator lacking this module in supporting transcriptional activation. Individual preparations of the Mediator complex lacking one or more distinct subunits have been variously termed ARC, CRSP, DRIP, PC2, SMCC and TRAP. Interacts with CREBBP. Interacts with ESR1, GR, RARA, RXRA and THRB in a ligand-dependent fashion. Binds the Herpes simplex virus activator VP16. As to expression, ubiquitously expressed. Highest levels in brain, heart, kidney, peripheral leukocytes, placenta, skeletal muscle and spleen.

The protein localises to the nucleus. In terms of biological role, component of the Mediator complex, a coactivator involved in the regulated transcription of nearly all RNA polymerase II-dependent genes. Mediator functions as a bridge to convey information from gene-specific regulatory proteins to the basal RNA polymerase II transcription machinery. Mediator is recruited to promoters by direct interactions with regulatory proteins and serves as a scaffold for the assembly of a functional preinitiation complex with RNA polymerase II and the general transcription factors. Required for RARA/RXRA-mediated transcription. The chain is Mediator of RNA polymerase II transcription subunit 25 (MED25) from Homo sapiens (Human).